The chain runs to 279 residues: Small ribosomal subunit protein uS2 (279 aa).

The segment at 232–279 is disordered; that stretch reads RRRGTDEKPEAGVASDEPLAEWERELLEEPKKSDEPKSDEQPAAAAAE. Positions 252 to 271 are enriched in basic and acidic residues; it reads EWERELLEEPKKSDEPKSDE.

This sequence belongs to the universal ribosomal protein uS2 family.

In Salinispora arenicola (strain CNS-205), this protein is Small ribosomal subunit protein uS2.